Here is a 179-residue protein sequence, read N- to C-terminus: Centromere protein R (179 aa).

The disordered stretch occupies residues 1–79 (MSAKRSLKLD…RLSRRGQPQT (79 aa)). Positions 30–50 (NSYSPTTGTCQISPFSSPTSH) are enriched in polar residues. Basic and acidic residues predominate over residues 51–64 (NAEDLRNGLSHGDE). Positions 172–176 (LQLLL) match the LXXLL motif motif.

Its subcellular location is the nucleus. The protein resides in the chromosome. It is found in the centromere. It localises to the kinetochore. Functionally, transcription coregulator that can have both coactivator and corepressor functions. Involved in the coactivation of nuclear receptors for retinoid X (RXRs) and thyroid hormone (TRs) in a ligand-dependent fashion. Probable component of a centromeric complex involved in assembly of kinetochore proteins, mitotic progression and chromosome segregation. This Gallus gallus (Chicken) protein is Centromere protein R (CENPR).